Consider the following 87-residue polypeptide: U3-theraphotoxin-Hhn1a 16 (87 aa).

The N-terminal stretch at 1-24 is a signal peptide; sequence MVNMKASMFLTFAGLVLLFVVCYA. A propeptide spanning residues 25-52 is cleaved from the precursor; that stretch reads SESEEKEFPKEMLSSIFAVDNDFKQGER. 3 disulfides stabilise this stretch: Cys-54/Cys-67, Cys-61/Cys-72, and Cys-66/Cys-79.

Belongs to the neurotoxin 10 (Hwtx-1) family. 51 (Hntx-8) subfamily. Hntx-8 sub-subfamily. As to expression, expressed by the venom gland.

The protein localises to the secreted. Its function is as follows. Ion channel inhibitor. This chain is U3-theraphotoxin-Hhn1a 16, found in Cyriopagopus hainanus (Chinese bird spider).